Here is a 348-residue protein sequence, read N- to C-terminus: NADH-ubiquinone oxidoreductase chain 2 (348 aa).

10 helical membrane passes run 1 to 21 (MSPY…TITF), 25 to 45 (SWLM…PLMV), 60 to 80 (FLTQ…NAWM), 93 to 115 (LSAP…HFWL), 149 to 169 (LNTT…GLGG), 177 to 197 (KVLA…IQYS), 200 to 220 (LALL…LTLM), 239 to 259 (IATM…PLTG), 274 to 294 (NLPA…FFYL), and 326 to 346 (LAML…MVAI).

The protein belongs to the complex I subunit 2 family.

It localises to the mitochondrion inner membrane. The catalysed reaction is a ubiquinone + NADH + 5 H(+)(in) = a ubiquinol + NAD(+) + 4 H(+)(out). Its function is as follows. Core subunit of the mitochondrial membrane respiratory chain NADH dehydrogenase (Complex I) that is believed to belong to the minimal assembly required for catalysis. Complex I functions in the transfer of electrons from NADH to the respiratory chain. The immediate electron acceptor for the enzyme is believed to be ubiquinone. In Latimeria chalumnae (Coelacanth), this protein is NADH-ubiquinone oxidoreductase chain 2 (MT-ND2).